Reading from the N-terminus, the 1392-residue chain is Leucine-rich PPR motif-containing protein, mitochondrial (1392 aa).

The N-terminal 77 residues, 1-77 (MSALLRPARW…LPEEPAPVRR (77 aa)), are a transit peptide targeting the mitochondrion. PPR repeat units lie at residues 125-159 (LLRS…GTVY), 160-194 (DVSH…NIQP), 195-229 (NRVT…DLPI), 230-264 (TEAV…GIEP), 265-299 (GPDT…DHYF), 300-334 (MDRD…RRSI), 402-436 (HSSS…GFPI), 437-471 (RTHY…GVDP), 677-708 (VGDP…ESDM), 709-745 (VIGG…SAVL), 746-783 (DTAK…IKDA), 784-820 (AVLS…AKPS), 821-856 (SNIS…VLPR), and 953-987 (RDQM…NLIP). N6-acetyllysine occurs at positions 151 and 186. The residue at position 291 (Lys-291) is an N6-acetyllysine. Lys-462 carries the post-translational modification N6-acetyllysine. Lys-749 carries the post-translational modification N6-acetyllysine. Ser-1025, Ser-1026, and Ser-1028 each carry phosphoserine. PPR repeat units follow at residues 1030-1064 (GDTV…DVVF), 1065-1101 (SSEA…GFTL), 1102-1136 (NGAA…EQVP), 1137-1173 (SELA…IELS), 1174-1208 (RMVF…ENQT), and 1315-1349 (NDRV…NMKL). Ser-1137 carries the phosphoserine modification.

As to quaternary structure, component of mRNP complexes associated with HNRPA1. Component of the complex, at least composed of LRPPRC, BECN1 and BCL2; the interactions prevent BECN1 from forming an autophagy-inducing complex with PIK3C3. Interacts with CECR2, HEBP2, MAP1S, UXT, PPARGC1A and FOXO1. Interacts (via N-terminus) with EIF4E; the interaction promotes association of EIF4E with 4ESE-containing mRNAs. Interacts with exportin XPO1/CRM1; interacts both alone and in complex with EIF4E and 4ESE-containing mRNAs to form an EIF4E-dependent mRNA export complex. Interacts with importin IPO8; the interaction occurs when LRPPRC is in its RNA-free form and returns LRPPRC to the nucleus for further export rounds. Interacts with BECN1. Widely expressed. Expressed in liver, brain and a subset of small diameter sensory neurons in the dorsal root ganglion (at protein level).

The protein resides in the mitochondrion. It is found in the nucleus. Its subcellular location is the nucleoplasm. The protein localises to the nucleus inner membrane. It localises to the nucleus outer membrane. Its function is as follows. May play a role in RNA metabolism in both nuclei and mitochondria. In the nucleus binds to HNRPA1-associated poly(A) mRNAs and is part of nmRNP complexes at late stages of mRNA maturation which are possibly associated with nuclear mRNA export. Positively modulates nuclear export of mRNAs containing the EIF4E sensitivity element (4ESE) by binding simultaneously to both EIF4E and the 4ESE and acting as a platform for assembly for the RNA export complex. Also binds to exportin XPO1/CRM1 to engage the nuclear pore and traffic the bound mRNAs to the cytoplasm. May bind mature mRNA in the nucleus outer membrane. In mitochondria binds to poly(A) mRNA. Plays a role in translation or stability of mitochondrially encoded cytochrome c oxidase (COX) subunits. May be involved in transcription regulation. Cooperates with PPARGC1A to regulate certain mitochondrially encoded genes and gluconeogenic genes and may regulate docking of PPARGC1A to transcription factors. Seems to be involved in the transcription regulation of the multidrug-related genes MDR1 and MVP. Part of a nuclear factor that binds to the invMED1 element of MDR1 and MVP gene promoters. Binds single-stranded DNA. Required for maintaining mitochondrial potential. Suppresses the initiation of basal levels of autophagy and mitophagy by sustaining BCL2 levels. The polypeptide is Leucine-rich PPR motif-containing protein, mitochondrial (Lrpprc) (Rattus norvegicus (Rat)).